The primary structure comprises 106 residues: Cytochrome c oxidase assembly protein COX16 homolog, mitochondrial (106 aa).

At Met-1–Thr-15 the chain is on the mitochondrial matrix side. A helical membrane pass occupies residues Leu-16–Leu-33. Over Arg-34 to Thr-106 the chain is Mitochondrial intermembrane. Residues Ile-81–Thr-106 are disordered.

It belongs to the COX16 family. Associates with the MITRAC complex. Interacts with MT-CO2/COX; specifically interacts with newly synthesized MT-CO2/COX. Interacts with SCO1, SCO2 and COA6.

It is found in the mitochondrion inner membrane. Functionally, required for the assembly of the mitochondrial respiratory chain complex IV (CIV), also known as cytochrome c oxidase. Promotes the insertion of copper into the active site of cytochrome c oxidase subunit II (MT-CO2/COX2). Interacts specifically with newly synthesized MT-CO2/COX and its copper center-forming metallochaperones SCO1, SCO2 and COA6. Probably facilitates MT-CO2/COX2 association with the MITRAC assembly intermediate containing MT-CO1/COX1, thereby participating in merging the MT-CO1/COX1 and MT-CO2/COX2 assembly lines. The polypeptide is Cytochrome c oxidase assembly protein COX16 homolog, mitochondrial (Mus musculus (Mouse)).